Consider the following 40-residue polypeptide: MKITSALVLLFAGVAFAQSADPNTNENKNVIHINSPSAAK.

Positions 1-17 are cleaved as a signal peptide; the sequence is MKITSALVLLFAGVAFA.

In terms of tissue distribution, lumen fluid of male accessory glands, becomes seminal fluid.

It localises to the secreted. In terms of biological role, transferred from male to female during mating and may affect egglaying and behavior after mating. The protein is Accessory gland-specific peptide 57Db (Mst57Db) of Drosophila melanogaster (Fruit fly).